Consider the following 491-residue polypeptide: Aspartyl/glutamyl-tRNA(Asn/Gln) amidotransferase subunit B (491 aa).

The protein belongs to the GatB/GatE family. GatB subfamily. Heterotrimer of A, B and C subunits.

It catalyses the reaction L-glutamyl-tRNA(Gln) + L-glutamine + ATP + H2O = L-glutaminyl-tRNA(Gln) + L-glutamate + ADP + phosphate + H(+). The enzyme catalyses L-aspartyl-tRNA(Asn) + L-glutamine + ATP + H2O = L-asparaginyl-tRNA(Asn) + L-glutamate + ADP + phosphate + 2 H(+). Functionally, allows the formation of correctly charged Asn-tRNA(Asn) or Gln-tRNA(Gln) through the transamidation of misacylated Asp-tRNA(Asn) or Glu-tRNA(Gln) in organisms which lack either or both of asparaginyl-tRNA or glutaminyl-tRNA synthetases. The reaction takes place in the presence of glutamine and ATP through an activated phospho-Asp-tRNA(Asn) or phospho-Glu-tRNA(Gln). The chain is Aspartyl/glutamyl-tRNA(Asn/Gln) amidotransferase subunit B from Trichormus variabilis (strain ATCC 29413 / PCC 7937) (Anabaena variabilis).